The sequence spans 199 residues: Recombination protein RecR (199 aa).

Residues 56-71 form a C4-type zinc finger; sequence CRSCFNVAQSELCRIC. The region spanning 79-174 is the Toprim domain; the sequence is ALICVVEEPK…RVTRLASGLP (96 aa).

The protein belongs to the RecR family.

May play a role in DNA repair. It seems to be involved in an RecBC-independent recombinational process of DNA repair. It may act with RecF and RecO. In Frankia alni (strain DSM 45986 / CECT 9034 / ACN14a), this protein is Recombination protein RecR.